Reading from the N-terminus, the 493-residue chain is Mitochondrial distribution and morphology protein 10 (493 aa).

This sequence belongs to the MDM10 family. Component of the ER-mitochondria encounter structure (ERMES) or MDM complex, composed of MMM1, MDM10, MDM12 and MDM34. Associates with the mitochondrial outer membrane sorting assembly machinery SAM(core) complex, which consists of SAM35, SAM37 and SAM50, to form a SAM(holo) complex.

It localises to the mitochondrion outer membrane. Component of the ERMES/MDM complex, which serves as a molecular tether to connect the endoplasmic reticulum and mitochondria. Components of this complex are involved in the control of mitochondrial shape and protein biogenesis and may function in phospholipid exchange. MDM10 is involved in the late assembly steps of the general translocase of the mitochondrial outer membrane (TOM complex). Functions in the TOM40-specific route of the assembly of outer membrane beta-barrel proteins, including the association of TOM40 with the receptor TOM22 and small TOM proteins. Can associate with the SAM(core) complex as well as the MDM12-MMM1 complex, both involved in late steps of the major beta-barrel assembly pathway, that is responsible for biogenesis of all outer membrane beta-barrel proteins. May act as a switch that shuttles between both complexes and channels precursor proteins into the TOM40-specific pathway. Plays a role in mitochondrial morphology and in the inheritance of mitochondria. This is Mitochondrial distribution and morphology protein 10 from Saccharomyces cerevisiae (strain ATCC 204508 / S288c) (Baker's yeast).